Reading from the N-terminus, the 66-residue chain is Sodium channel alpha-toxin Acra8 (66 aa).

The region spanning 2 to 64 (RDGYIVDDKN…VPIKEKGRCN (63 aa)) is the LCN-type CS-alpha/beta domain. 4 disulfides stabilise this stretch: Cys-12–Cys-63, Cys-16–Cys-36, Cys-22–Cys-46, and Cys-26–Cys-48. Residue Asn-64 is modified to Asparagine amide. Residues 65–66 (GR) constitute a propeptide that is removed on maturation.

This sequence belongs to the long (4 C-C) scorpion toxin superfamily. Sodium channel inhibitor family. Alpha subfamily. Expressed by the venom gland.

The protein resides in the secreted. Alpha toxins bind voltage-independently at site-3 of sodium channels (Nav) and inhibit the inactivation of the activated channels, thereby blocking neuronal transmission. This chain is Sodium channel alpha-toxin Acra8, found in Androctonus crassicauda (Arabian fat-tailed scorpion).